A 922-amino-acid chain; its full sequence is Pertactin autotransporter (922 aa).

An N-terminal signal peptide occupies residues 1–34 (MNMSLSRIVKAAPLRRTTLAMALGALGAAPAAYA). The short motif at 260 to 262 (RGD) is the Cell attachment site; involved in adhesion to various eukaryotic cell lines element. 3 repeat units span residues 266–270 (GGAVP), 271–275 (GGAVP), and 276–280 (GGAVP). A 4 X 5 AA tandem repeats of G-G-A-V-P region spans residues 266-290 (GGAVPGGAVPGGAVPGGFGPLLDGW). The stretch at 281–285 (GGFGP) is one 4; approximate repeat. The interval 561-619 (SLVGAKAPPAPKPAPQPGPQPGPQPPQPPQPPQPPQPPQPPQRQPEAPAPQPPAGRELS) is disordered. The span at 568–613 (PPAPKPAPQPGPQPGPQPPQPPQPPQPPQPPQPPQRQPEAPAPQPP) shows a compositional bias: pro residues. The interval 575 to 603 (PQPGPQPGPQPPQPPQPPQPPQPPQPPQR) is 9 X 3 AA approximate repeats of P-Q-P. Residues 654–922 (LNPDAGGAWG…TFHAGYRYSW (269 aa)) enclose the Autotransporter domain.

Monomer.

The protein localises to the periplasm. It is found in the secreted. The protein resides in the cell surface. Its subcellular location is the cell outer membrane. In terms of biological role, agglutinogen that binds to eukaryotic cells; a process mediated by the R-G-D sequence. Pertactin may have a role in bacterial adhesion, and thus play a role in virulence. May contribute to the disease state of whooping cough. The polypeptide is Pertactin autotransporter (prn) (Bordetella parapertussis (strain 12822 / ATCC BAA-587 / NCTC 13253)).